We begin with the raw amino-acid sequence, 190 residues long: A-type ATP synthase subunit E (190 aa).

This sequence belongs to the V-ATPase E subunit family. As to quaternary structure, has multiple subunits with at least A(3), B(3), C, D, E, F, H, I and proteolipid K(x).

Its subcellular location is the cell membrane. Component of the A-type ATP synthase that produces ATP from ADP in the presence of a proton gradient across the membrane. This chain is A-type ATP synthase subunit E, found in Pyrobaculum neutrophilum (strain DSM 2338 / JCM 9278 / NBRC 100436 / V24Sta) (Thermoproteus neutrophilus).